The following is a 101-amino-acid chain: MAKIISSELPDLILSSVITDKTIKLLETKNYTFLAPKEVSKIAFKRAIEDMFKVKVNSINSLNLPNKKKRVGRYKTGSLPLYKKMIVKLDSKDTIDLFLDR.

The protein belongs to the universal ribosomal protein uL23 family. Part of the 50S ribosomal subunit.

Its subcellular location is the plastid. It localises to the chloroplast. Its function is as follows. Binds to 23S rRNA. This is Large ribosomal subunit protein uL23c (rpl23) from Cyanidium caldarium (Red alga).